A 690-amino-acid polypeptide reads, in one-letter code: Serotransferrin (690 aa).

Positions 1-17 (MKPLLLLTLLGCLAAAL) are cleaved as a signal peptide. Transferrin-like domains are found at residues 24–329 (VKWC…SLKK) and 340–670 (IKWC…SLRK). Cysteine 27 and cysteine 49 are disulfide-bonded. Fe(3+)-binding residues include aspartate 73 and tyrosine 103. Intrachain disulfides connect cysteine 126–cysteine 206, cysteine 171–cysteine 185, and cysteine 234–cysteine 248. Residues threonine 128, lysine 132, alanine 134, and glycine 135 each coordinate hydrogencarbonate. Residue tyrosine 200 coordinates Fe(3+). A Fe(3+)-binding site is contributed by histidine 256. 2 disulfide bridges follow: cysteine 343–cysteine 379 and cysteine 353–cysteine 370. Residues aspartate 394 and tyrosine 429 each contribute to the Fe(3+) site. 7 disulfide bridges follow: cysteine 404-cysteine 682, cysteine 419-cysteine 643, cysteine 452-cysteine 530, cysteine 476-cysteine 671, cysteine 486-cysteine 499, cysteine 496-cysteine 513, and cysteine 570-cysteine 584. Threonine 454, arginine 458, alanine 460, and glycine 461 together coordinate hydrogencarbonate. Tyrosine 524 serves as a coordination point for Fe(3+). Histidine 592 contacts Fe(3+).

This sequence belongs to the transferrin family. Monomer.

It is found in the secreted. Its function is as follows. Transferrins are iron binding transport proteins which can bind two Fe(3+) ions in association with the binding of an anion, usually bicarbonate. The sequence is that of Serotransferrin (tf) from Oryzias latipes (Japanese rice fish).